The primary structure comprises 127 residues: DNA-directed RNA polymerase subunit omega (127 aa).

The protein belongs to the RNA polymerase subunit omega family. In terms of assembly, the RNAP catalytic core consists of 2 alpha, 1 beta, 1 beta' and 1 omega subunit. When a sigma factor is associated with the core the holoenzyme is formed, which can initiate transcription.

The catalysed reaction is RNA(n) + a ribonucleoside 5'-triphosphate = RNA(n+1) + diphosphate. In terms of biological role, promotes RNA polymerase assembly. Latches the N- and C-terminal regions of the beta' subunit thereby facilitating its interaction with the beta and alpha subunits. This chain is DNA-directed RNA polymerase subunit omega (rpoZ), found in Rickettsia prowazekii (strain Madrid E).